Here is a 341-residue protein sequence, read N- to C-terminus: S-adenosylmethionine:tRNA ribosyltransferase-isomerase (341 aa).

Belongs to the QueA family. As to quaternary structure, monomer.

Its subcellular location is the cytoplasm. It carries out the reaction 7-aminomethyl-7-carbaguanosine(34) in tRNA + S-adenosyl-L-methionine = epoxyqueuosine(34) in tRNA + adenine + L-methionine + 2 H(+). It functions in the pathway tRNA modification; tRNA-queuosine biosynthesis. Functionally, transfers and isomerizes the ribose moiety from AdoMet to the 7-aminomethyl group of 7-deazaguanine (preQ1-tRNA) to give epoxyqueuosine (oQ-tRNA). This is S-adenosylmethionine:tRNA ribosyltransferase-isomerase from Clostridium tetani (strain Massachusetts / E88).